We begin with the raw amino-acid sequence, 320 residues long: Putative malonate transporter (320 aa).

Transmembrane regions (helical) follow at residues 1-21 (MAEI…GYLT), 32-52 (MGWL…FKLV), 65-85 (FILT…AIGL), 113-133 (GLAL…IFCF), 167-187 (IAFH…FLSF), 196-216 (LIDY…GVTL), 256-276 (IWVQ…VFVI), and 289-309 (ATIL…LYLI).

It belongs to the auxin efflux carrier (TC 2.A.69) family.

Its subcellular location is the cell membrane. The sequence is that of Putative malonate transporter (mdcF) from Rhizobium meliloti (strain 1021) (Ensifer meliloti).